Reading from the N-terminus, the 126-residue chain is Cytochrome c2 (126 aa).

Heme c-binding residues include Cys-17, Cys-20, His-21, and Met-101.

The protein belongs to the cytochrome c family. In terms of processing, binds 1 heme c group covalently per subunit.

The protein localises to the periplasm. Functionally, cytochrome c2 is found mainly in purple, non-sulfur, photosynthetic bacteria where it functions as the electron donor to the oxidized bacteriochlorophyll in the photophosphorylation pathway. However, it may also have a role in the respiratory chain and is found in some non-photosynthetic bacteria. The chain is Cytochrome c2 from Rhodovulum adriaticum (Rhodopseudomonas adriatica).